A 2221-amino-acid chain; its full sequence is RNA-directed RNA polymerase L (2221 aa).

The interval Lys-29 to Glu-292 is endonuclease. Mn(2+) is bound by residues Glu-54, Asp-91, and Glu-104. Lys-117 is a catalytic residue. One can recognise a RdRp catalytic domain in the interval Leu-1171–Ile-1369. Position 1327 (Asp-1327) interacts with Mg(2+).

Belongs to the Bunyavirales RNA polymerase family. In terms of assembly, homomultimer; the oligomeric structure is essential for the polymerase activity. Interacts with nucleoprotein N. Interacts with protein Z; this interaction inhibits viral transcription and replication, Z partially blocks the product exit tunnel for the releasing nascent RNA product. Requires Mn(2+) as cofactor. The cofactor is Mg(2+).

The protein resides in the virion. It is found in the host cytoplasm. The enzyme catalyses RNA(n) + a ribonucleoside 5'-triphosphate = RNA(n+1) + diphosphate. Functionally, RNA-dependent RNA polymerase, which is responsible for the replication and transcription of the viral RNA genome using antigenomic RNA as an intermediate. During transcription, synthesizes subgenomic RNAs and assures their capping by a cap-snatching mechanism, which involves the endonuclease activity cleaving the host capped pre-mRNAs. These short capped RNAs are then used as primers for viral transcription. The 3'-end of subgenomic mRNAs molecules are heterogeneous and not polyadenylated. The replicase function is to direct synthesis of antigenomic and genomic RNA which are encapsidated and non capped. As a consequence of the use of the same enzyme for both transcription and replication, these mechanisms need to be well coordinated. These processes may be regulated by proteins N and Z in a dose-dependent manner. Z protein inhibits the viral polymerase L und thus the viral transcription and RNA synthesis. The chain is RNA-directed RNA polymerase L from Sigmodon hispidus (Hispid cotton rat).